The sequence spans 424 residues: Virion nicking-joining enzyme (424 aa).

PLD phosphodiesterase domains follow at residues 110–137 (LGGV…DWRS) and 320–346 (YSRV…TGNY).

It belongs to the orthopoxvirus OPG042 family.

It localises to the virion. Its function is as follows. DNA nicking enzyme that cleaves extruded cruciform DNA at its tip. Probably nicks viral hairpins. The protein is Virion nicking-joining enzyme (OPG042) of Vaccinia virus (strain Western Reserve) (VACV).